Here is a 443-residue protein sequence, read N- to C-terminus: Maintenance of mitochondrial morphology protein 1 (443 aa).

The Lumenal segment spans residues 1–80 (MADLETSDLS…PSNTWSFTQG (80 aa)). The chain crosses the membrane as a helical span at residues 81–101 (LIVGQLSVVFVIVIFIKFFVF). The Cytoplasmic segment spans residues 102–443 (AESSPALAKS…NGDKVEDGSN (342 aa)). 2 disordered regions span residues 126-146 (KKDQ…TTAS) and 304-358 (LSAH…NDGT). Residues 131-142 (SSDDADPDDDSE) are compositionally biased toward acidic residues. Residues 165-417 (SPESLDWFNV…EPRFQVVRLP (253 aa)) form the SMP-LTD domain.

It belongs to the MMM1 family. As to quaternary structure, homodimer. Component of the ER-mitochondria encounter structure (ERMES) or MDM complex, composed of MMM1, MDM10, MDM12 and MDM34. An MMM1 homodimer associates with one molecule of MDM12 on each side in a pairwise head-to-tail manner, and the SMP-LTD domains of MMM1 and MDM12 generate a continuous hydrophobic tunnel for phospholipid trafficking.

Its subcellular location is the endoplasmic reticulum membrane. Its function is as follows. Component of the ERMES/MDM complex, which serves as a molecular tether to connect the endoplasmic reticulum (ER) and mitochondria. Components of this complex are involved in the control of mitochondrial shape and protein biogenesis, and function in nonvesicular lipid trafficking between the ER and mitochondria. The MDM12-MMM1 subcomplex functions in the major beta-barrel assembly pathway that is responsible for biogenesis of all outer membrane beta-barrel proteins, and acts in a late step after the SAM complex. The MDM10-MDM12-MMM1 subcomplex further acts in the TOM40-specific pathway after the action of the MDM12-MMM1 complex. Essential for establishing and maintaining the structure of mitochondria and maintenance of mtDNA nucleoids. In Scheffersomyces stipitis (strain ATCC 58785 / CBS 6054 / NBRC 10063 / NRRL Y-11545) (Yeast), this protein is Maintenance of mitochondrial morphology protein 1.